Consider the following 125-residue polypeptide: Small ribosomal subunit protein uS13 (125 aa).

The tract at residues 97 to 125 (PVRGQKTRSNARTRKGPRPSRIKTKKKSS) is disordered. Basic residues predominate over residues 101–125 (QKTRSNARTRKGPRPSRIKTKKKSS).

Belongs to the universal ribosomal protein uS13 family. In terms of assembly, part of the 30S ribosomal subunit. Forms a loose heterodimer with protein S19. Forms two bridges to the 50S subunit in the 70S ribosome.

Located at the top of the head of the 30S subunit, it contacts several helices of the 16S rRNA. In the 70S ribosome it contacts the 23S rRNA (bridge B1a) and protein L5 of the 50S subunit (bridge B1b), connecting the 2 subunits; these bridges are implicated in subunit movement. Contacts the tRNAs in the A and P-sites. The protein is Small ribosomal subunit protein uS13 of Thermotoga maritima (strain ATCC 43589 / DSM 3109 / JCM 10099 / NBRC 100826 / MSB8).